The following is a 215-amino-acid chain: Cytochrome c biogenesis ATP-binding export protein CcmA (215 aa).

The ABC transporter domain occupies 3-215 (LEAENLAGER…MAAFSVEDIA (213 aa)). 35–42 (GPNGSGKS) serves as a coordination point for ATP.

This sequence belongs to the ABC transporter superfamily. CcmA exporter (TC 3.A.1.107) family. In terms of assembly, the complex is composed of two ATP-binding proteins (CcmA) and two transmembrane proteins (CcmB).

The protein resides in the cell inner membrane. It catalyses the reaction heme b(in) + ATP + H2O = heme b(out) + ADP + phosphate + H(+). Part of the ABC transporter complex CcmAB involved in the biogenesis of c-type cytochromes; once thought to export heme, this seems not to be the case, but its exact role is uncertain. Responsible for energy coupling to the transport system. In Brucella melitensis biotype 1 (strain ATCC 23456 / CCUG 17765 / NCTC 10094 / 16M), this protein is Cytochrome c biogenesis ATP-binding export protein CcmA.